The sequence spans 431 residues: Glutamate--tRNA ligase 1 (431 aa).

A 'HIGH' region motif is present at residues 6-16 (PSPTGDMHIGN). A 'KMSKS' region motif is present at residues 235–239 (KMSKR). Lysine 238 lines the ATP pocket.

It belongs to the class-I aminoacyl-tRNA synthetase family. Glutamate--tRNA ligase type 1 subfamily. Monomer.

The protein localises to the cytoplasm. The enzyme catalyses tRNA(Glu) + L-glutamate + ATP = L-glutamyl-tRNA(Glu) + AMP + diphosphate. Its function is as follows. Catalyzes the attachment of glutamate to tRNA(Glu) in a two-step reaction: glutamate is first activated by ATP to form Glu-AMP and then transferred to the acceptor end of tRNA(Glu). This Campylobacter jejuni subsp. jejuni serotype O:6 (strain 81116 / NCTC 11828) protein is Glutamate--tRNA ligase 1.